The following is a 136-amino-acid chain: Holo-[acyl-carrier-protein] synthase (136 aa).

2 residues coordinate Mg(2+): Asp-8 and Glu-57.

This sequence belongs to the P-Pant transferase superfamily. AcpS family. Mg(2+) serves as cofactor.

It is found in the cytoplasm. It carries out the reaction apo-[ACP] + CoA = holo-[ACP] + adenosine 3',5'-bisphosphate + H(+). Its function is as follows. Transfers the 4'-phosphopantetheine moiety from coenzyme A to a Ser of acyl-carrier-protein. In Methylorubrum extorquens (strain PA1) (Methylobacterium extorquens), this protein is Holo-[acyl-carrier-protein] synthase.